A 136-amino-acid chain; its full sequence is Large ribosomal subunit protein eL27 (136 aa).

In terms of domain architecture, KOW spans 5–36; that stretch reads MKPGKVVLVLRGKYAGRKAVVVKQQDEGVSDR.

The protein belongs to the eukaryotic ribosomal protein eL27 family. Component of the large ribosomal subunit.

It is found in the cytoplasm. The protein resides in the cytosol. It localises to the rough endoplasmic reticulum. Its function is as follows. Component of the large ribosomal subunit. The chain is Large ribosomal subunit protein eL27 (rpl-27) from Caenorhabditis elegans.